A 110-amino-acid polypeptide reads, in one-letter code: Large ribosomal subunit protein uL22 (110 aa).

It belongs to the universal ribosomal protein uL22 family. In terms of assembly, part of the 50S ribosomal subunit.

Its function is as follows. This protein binds specifically to 23S rRNA; its binding is stimulated by other ribosomal proteins, e.g. L4, L17, and L20. It is important during the early stages of 50S assembly. It makes multiple contacts with different domains of the 23S rRNA in the assembled 50S subunit and ribosome. Functionally, the globular domain of the protein is located near the polypeptide exit tunnel on the outside of the subunit, while an extended beta-hairpin is found that lines the wall of the exit tunnel in the center of the 70S ribosome. The chain is Large ribosomal subunit protein uL22 from Leptospira interrogans serogroup Icterohaemorrhagiae serovar copenhageni (strain Fiocruz L1-130).